The primary structure comprises 168 residues: Xanthine-guanine phosphoribosyltransferase (168 aa).

5-phospho-alpha-D-ribose 1-diphosphate is bound by residues 43 to 44 and 102 to 110; these read RG and DDLVDTGAT. D103 contacts Mg(2+). Residues D106 and I149 each contribute to the guanine site. Xanthine is bound by residues D106 and I149. Residues 106–110 and 148–149 each bind GMP; these read DTGAT and WI.

Belongs to the purine/pyrimidine phosphoribosyltransferase family. XGPT subfamily. In terms of assembly, homotetramer. Mg(2+) serves as cofactor.

It is found in the cell inner membrane. The enzyme catalyses GMP + diphosphate = guanine + 5-phospho-alpha-D-ribose 1-diphosphate. It carries out the reaction XMP + diphosphate = xanthine + 5-phospho-alpha-D-ribose 1-diphosphate. The catalysed reaction is IMP + diphosphate = hypoxanthine + 5-phospho-alpha-D-ribose 1-diphosphate. It participates in purine metabolism; GMP biosynthesis via salvage pathway; GMP from guanine: step 1/1. It functions in the pathway purine metabolism; XMP biosynthesis via salvage pathway; XMP from xanthine: step 1/1. Its function is as follows. Purine salvage pathway enzyme that catalyzes the transfer of the ribosyl-5-phosphate group from 5-phospho-alpha-D-ribose 1-diphosphate (PRPP) to the N9 position of the 6-oxopurines guanine and xanthine to form the corresponding ribonucleotides GMP (guanosine 5'-monophosphate) and XMP (xanthosine 5'-monophosphate), with the release of PPi. To a lesser extent, also acts on hypoxanthine. This chain is Xanthine-guanine phosphoribosyltransferase, found in Nitrobacter winogradskyi (strain ATCC 25391 / DSM 10237 / CIP 104748 / NCIMB 11846 / Nb-255).